The chain runs to 648 residues: A-type voltage-gated potassium channel KCND1 (648 aa).

At 1–183 (MAAGVATWLP…RAFENPHTST (183 aa)) the chain is on the cytoplasmic side. Positions 2 to 20 (AAGVATWLPFARAAAVGWL) are interaction with KCNIP1, KCNIP2, and other family members. The interval 2-20 (AAGVATWLPFARAAAVGWL) is interaction with KCNIP2. Zn(2+) is bound by residues His104, Cys131, and Cys132. The segment at 144 to 164 (AERLAEDEEAEQAGDGPTLPA) is disordered. The chain crosses the membrane as a helical span at residues 184 to 205 (AALVFYYVTGFFIAVSVIANVV). The Extracellular portion of the chain corresponds to 206 to 230 (ETIPCRSPTRRPPREQPCGDRFPLA). Residues 231–252 (FFCMDTACVLIFTGEYLLRLFA) form a helical membrane-spanning segment. Topologically, residues 253–263 (APSRCRFLRSV) are cytoplasmic. A helical transmembrane segment spans residues 264-284 (MSLIDVVAILPYYIGLFMPKN). Residues 285 to 287 (EDV) are Extracellular-facing. A helical; Voltage-sensor membrane pass occupies residues 288–308 (SGAFVTLRVFRVFRIFKFSRH). The Cytoplasmic segment spans residues 309–323 (SQGLRILGYTLKSCA). Residues 310-323 (QGLRILGYTLKSCA) are S4-S5 linker. A helical membrane pass occupies residues 324-345 (SELGFLLFSLTMAIIIFATVMF). Residues 346-359 (YAEKGTNKTNFTSI) are Extracellular-facing. Asn352 and Asn355 each carry an N-linked (GlcNAc...) asparagine glycan. The helical intramembrane region spans 360–371 (PAAFWYTIVTMT). Residues 372–377 (TLGYGD) carry the Selectivity filter motif. Residues 372 to 379 (TLGYGDMV) lie within the membrane without spanning it. Residues 380–386 (PSTIAGK) are Extracellular-facing. Residues 387 to 415 (IFGSICSLSGVLVIALPVPVIVSNFSRIY) traverse the membrane as a helical segment. Topologically, residues 416–648 (HQNQRADKRR…LPETVKISSL (233 aa)) are cytoplasmic. The residue at position 458 (Ser458) is a Phosphoserine. The tract at residues 474–489 (FEQQHHHLLHCLEKTT) is mediates dendritic targeting. The interval 474 to 489 (FEQQHHHLLHCLEKTT) is required for dendritic targeting. Position 555 is a phosphoserine (Ser555). A disordered region spans residues 601–636 (IPTPPANTPDESQPSSPGGGGGGASSTLRNSSLGTP).

This sequence belongs to the potassium channel family. D (Shal) (TC 1.A.1.2) subfamily. Kv4.1/KCND1 sub-subfamily. Component of heteromultimeric potassium channels. Identified in potassium channel complexes containing KCND1, KCND2, KCND3, KCNIP1, KCNIP2, KCNIP3, KCNIP4, DPP6 and DPP10.

Its subcellular location is the cell membrane. The enzyme catalyses K(+)(in) = K(+)(out). In terms of biological role, A-type voltage-gated potassium channel that mediates transmembrane potassium transport in excitable membranes in the brain. Mediates A-type current I(SA) in suprachiasmatic nucleus (SCN) neurons. Exhibits a low-threshold A-type current with a hyperpolarized steady-state inactivation midpoint and the recovery process was steeply voltage-dependent, with recovery being markedly faster at more negative potentials. May regulates repetitive firing rates in the suprachiasmatic nucleus (SCN) neurons and circadian rhythms in neuronal excitability and behavior. Contributes to the regulation of the circadian rhythm of action potential firing in suprachiasmatic nucleus neurons, which regulates the circadian rhythm of locomotor activity. The regulatory subunit KCNIP1 modulates the kinetics of channel inactivation, increases the current amplitudes and accelerates recovery from inactivation, shifts activation in a depolarizing direction. The regulatory subunit DPP10 decreases the voltage sensitivity of the inactivation channel gating. This is A-type voltage-gated potassium channel KCND1 from Bos taurus (Bovine).